The following is a 691-amino-acid chain: Guanylate cyclase soluble subunit alpha-1 (691 aa).

S267 is modified (phosphoserine). In terms of domain architecture, Guanylate cyclase spans 480–607 (VTMLFSDIVG…GNNVTLANKF (128 aa)).

It belongs to the adenylyl cyclase class-4/guanylyl cyclase family. In terms of assembly, the active enzyme is formed by a heterodimer of an alpha and a beta subunit. Heterodimer with GUCY1B1. The cofactor is Mg(2+). Mn(2+) is required as a cofactor.

The protein localises to the cytoplasm. The enzyme catalyses GTP = 3',5'-cyclic GMP + diphosphate. Activated by nitric oxide in the presence of magnesium or manganese ions. The protein is Guanylate cyclase soluble subunit alpha-1 (Gucy1a1) of Mus musculus (Mouse).